The primary structure comprises 64 residues: Small ribosomal subunit protein bS21 (64 aa).

A disordered region spans residues Lys-42–Tyr-64. A compositionally biased stretch (basic residues) spans Ala-50–Tyr-64.

This sequence belongs to the bacterial ribosomal protein bS21 family.

The polypeptide is Small ribosomal subunit protein bS21 (Malacoplasma penetrans (strain HF-2) (Mycoplasma penetrans)).